We begin with the raw amino-acid sequence, 274 residues long: 2,3,4,5-tetrahydropyridine-2,6-dicarboxylate N-succinyltransferase (274 aa).

The substrate site is built by R104 and D141.

This sequence belongs to the transferase hexapeptide repeat family. Homotrimer.

It localises to the cytoplasm. It catalyses the reaction (S)-2,3,4,5-tetrahydrodipicolinate + succinyl-CoA + H2O = (S)-2-succinylamino-6-oxoheptanedioate + CoA. The protein operates within amino-acid biosynthesis; L-lysine biosynthesis via DAP pathway; LL-2,6-diaminopimelate from (S)-tetrahydrodipicolinate (succinylase route): step 1/3. This is 2,3,4,5-tetrahydropyridine-2,6-dicarboxylate N-succinyltransferase from Serratia proteamaculans (strain 568).